The following is a 57-amino-acid chain: Protein YnaL (57 aa).

The interval 7-57 (LQIPVPEPIPGDPVPVPDPIPRPQPMPDPPPDEEPIKLSHRERRSARIRAC) is disordered. The span at 11-35 (VPEPIPGDPVPVPDPIPRPQPMPDP) shows a compositional bias: pro residues. A compositionally biased stretch (basic residues) spans 46–57 (HRERRSARIRAC).

This Escherichia coli (strain K12) protein is Protein YnaL.